A 63-amino-acid chain; its full sequence is 2-hydroxymuconate tautomerase (63 aa).

Pro-2 (proton acceptor; via imino nitrogen) is an active-site residue.

This sequence belongs to the 4-oxalocrotonate tautomerase family. Homohexamer.

It carries out the reaction (2Z,4E)-2-hydroxyhexa-2,4-dienedioate = (3E)-2-oxohex-3-enedioate. Its pathway is aromatic compound metabolism; salicylate degradation. Functionally, catalyzes the ketonization of 2-hydroxymuconate stereoselectively to yield 2-oxo-3-hexenedioate. The chain is 2-hydroxymuconate tautomerase (aphI) from Comamonas testosteroni (Pseudomonas testosteroni).